The primary structure comprises 497 residues: Glycerol kinase (497 aa).

An ADP-binding site is contributed by Thr-12. The ATP site is built by Thr-12, Thr-13, and Ser-14. Thr-12 lines the sn-glycerol 3-phosphate pocket. Arg-16 lines the ADP pocket. Positions 82, 83, 134, and 243 each coordinate sn-glycerol 3-phosphate. The glycerol site is built by Arg-82, Glu-83, Tyr-134, Asp-243, and Gln-244. ADP is bound by residues Thr-265 and Gly-308. The ATP site is built by Thr-265, Gly-308, Gln-312, and Gly-409. ADP-binding residues include Gly-409 and Asn-413.

It belongs to the FGGY kinase family.

It catalyses the reaction glycerol + ATP = sn-glycerol 3-phosphate + ADP + H(+). The protein operates within polyol metabolism; glycerol degradation via glycerol kinase pathway; sn-glycerol 3-phosphate from glycerol: step 1/1. Inhibited by fructose 1,6-bisphosphate (FBP). In terms of biological role, key enzyme in the regulation of glycerol uptake and metabolism. Catalyzes the phosphorylation of glycerol to yield sn-glycerol 3-phosphate. This chain is Glycerol kinase, found in Oleidesulfovibrio alaskensis (strain ATCC BAA-1058 / DSM 17464 / G20) (Desulfovibrio alaskensis).